The following is a 103-amino-acid chain: Ghrelin (103 aa).

The signal sequence occupies residues 1–26; the sequence is MPLRRRASHMFVLLCALSLCVESVKG. A disordered region spans residues 27-51; it reads GTSFLSPAQKPQGRRPPRMGRRDVA. The O-decanoyl serine; alternate moiety is linked to residue Ser29. Ser29 carries O-hexanoyl serine; alternate lipidation. Residue Ser29 is the site of O-octanoyl serine; alternate attachment. Gln38 carries the post-translational modification Glutamine amide. The residue at position 45 (Met45) is a Methionine amide. A propeptide spans 49–103 (removed in mature form); the sequence is DVAEPEIPVIKEDDQFMMSAPFELSVSLSEAEYEKYGPVLQKVLVNLLGDSPLEF.

It belongs to the motilin family. Post-translationally, O-octanoylated by GOAT/MBOAT4. O-octanoylation or O-decanoylation is essential for activity. The O-decanoylated form differs in the length of the carbon backbone of the carboxylic acid forming an ester bond with Ser-29. As to expression, expressed in the telencephalon, hypothalamus, pituitary, intestine, liver, spleen and gill, with expression strongest in the intestine.

Its subcellular location is the secreted. Ligand for growth hormone secretagogue receptor type 1 (GHSR). Induces the release of growth hormone from the pituitary. Induces adiposity and stimulates gastric acid secretion. Involved in growth regulation. Has an appetite-stimulating effect. The polypeptide is Ghrelin (ghrl) (Carassius auratus (Goldfish)).